We begin with the raw amino-acid sequence, 1249 residues long: Voltage-dependent calcium channel unc-36 (1249 aa).

An N-terminal signal peptide occupies residues 1–19 (MRVVHLLVVLATYVSTTSS). Residues 20–1228 (FNKESIKECA…SENERRPCST (1209 aa)) are Extracellular-facing. 11 N-linked (GlcNAc...) asparagine glycosylation sites follow: Asn-100, Asn-140, Asn-146, Asn-302, Asn-520, Asn-558, Asn-757, Asn-838, Asn-903, Asn-923, and Asn-1130. In terms of domain architecture, VWFA spans 250 to 479 (NVLIMLDMSG…EKIHHYIRRM (230 aa)). The chain crosses the membrane as a helical span at residues 1229–1248 (SPTIVSIFQILFGVFLHFCI). Phe-1249 is a topological domain (cytoplasmic).

In terms of tissue distribution, decendants of the cells AB and AB.p (that give rise to nearly all non-pharyngeal neurons), decendants of P1 (that give rise to body muscle) and cell lineages that give rise to the adult and juvenile motor neurons. Expressed in body wall, vulval muscle and pharyngeal muscle.

It is found in the membrane. In terms of biological role, may act as an auxiliary subunit of the unc-2 voltage-gated calcium channel which appears to trigger calcium-activated signaling pathways that control the serotonin response. Inhibiting serotonin sensitivity of the vulval muscles results in egg laying defects. May act in both neurons and muscle cells to enhance motor activity as it is required for coordinated movement. Has a role in neural depolarization-induced calcium influx and pharyngeal pumping. Involved in restricting the expression of the putative olfactory receptor str-2 to only one of the two AWC neurons. The sequence is that of Voltage-dependent calcium channel unc-36 (unc-36) from Caenorhabditis elegans.